A 156-amino-acid chain; its full sequence is Small ribosomal subunit protein uS7 (156 aa).

It belongs to the universal ribosomal protein uS7 family. Part of the 30S ribosomal subunit. Contacts proteins S9 and S11.

Functionally, one of the primary rRNA binding proteins, it binds directly to 16S rRNA where it nucleates assembly of the head domain of the 30S subunit. Is located at the subunit interface close to the decoding center, probably blocks exit of the E-site tRNA. In Clostridium acetobutylicum (strain ATCC 824 / DSM 792 / JCM 1419 / IAM 19013 / LMG 5710 / NBRC 13948 / NRRL B-527 / VKM B-1787 / 2291 / W), this protein is Small ribosomal subunit protein uS7.